The chain runs to 157 residues: Small ribosomal subunit protein uS13 (157 aa).

The protein belongs to the universal ribosomal protein uS13 family. As to quaternary structure, part of the 30S ribosomal subunit. Forms a loose heterodimer with protein S19. Forms two bridges to the 50S subunit in the 70S ribosome.

In terms of biological role, located at the top of the head of the 30S subunit, it contacts several helices of the 16S rRNA. In the 70S ribosome it contacts the 23S rRNA (bridge B1a) and protein L5 of the 50S subunit (bridge B1b), connecting the 2 subunits; these bridges are implicated in subunit movement. The sequence is that of Small ribosomal subunit protein uS13 from Thermofilum pendens (strain DSM 2475 / Hrk 5).